The primary structure comprises 430 residues: Mothers against decapentaplegic homolog 9 (430 aa).

In terms of domain architecture, MH1 spans 16-140 (PAVKRLLGWK…YRRVETPVLP (125 aa)). 4 residues coordinate Zn(2+): Cys-68, Cys-113, Cys-125, and His-130. The segment at 186–222 (CPAPPSSPGHVFPQSPCPTSYPHSPGSPSESDSPYQH) is disordered. The segment covering 202 to 221 (CPTSYPHSPGSPSESDSPYQ) has biased composition (polar residues). In terms of domain architecture, MH2 spans 236 to 430 (WCSVAYYELN…SPHNPISSVS (195 aa)).

Belongs to the dwarfin/SMAD family. As to quaternary structure, interaction with the co-SMAD SMAD4. Interacts with PEBP2-alpha subunit. Interacts with RANBP3L. Phosphorylated on serine by BMP (bone morphogenetic proteins) type 1 receptor kinase and activin type I receptor-like kinases (ALK-2, ALK-3 and ALK-6).

It localises to the cytoplasm. It is found in the nucleus. Its function is as follows. Transcriptional modulator activated by BMP (bone morphogenetic proteins) type 1 receptor kinase. SMAD9 is a receptor-regulated SMAD (R-SMAD). Has been shown to be activated by activin type I receptor-like kinases (ALK-2, ALK-3, ALK-6) which stimulate heteromerization between SMAD9 and SMAD4. May play a role in osteoblast differentiation and maturation. This is Mothers against decapentaplegic homolog 9 (Smad9) from Mus musculus (Mouse).